Here is a 105-residue protein sequence, read N- to C-terminus: Large ribosomal subunit protein mL49 (105 aa).

A mitochondrion-targeting transit peptide spans 1–15 (MRSSLKPVLSNLRFN).

This sequence belongs to the mitochondrion-specific ribosomal protein mL49 family. In terms of assembly, component of the mitochondrial large ribosomal subunit (mt-LSU). Mature yeast 74S mitochondrial ribosomes consist of a small (37S) and a large (54S) subunit. The 37S small subunit contains a 15S ribosomal RNA (15S mt-rRNA) and at least 32 different proteins. The 54S large subunit contains a 21S rRNA (21S mt-rRNA) and at least 45 different proteins.

It is found in the mitochondrion. Component of the mitochondrial ribosome (mitoribosome), a dedicated translation machinery responsible for the synthesis of mitochondrial genome-encoded proteins, including at least some of the essential transmembrane subunits of the mitochondrial respiratory chain. The mitoribosomes are attached to the mitochondrial inner membrane and translation products are cotranslationally integrated into the membrane. The protein is Large ribosomal subunit protein mL49 (img2) of Schizosaccharomyces pombe (strain 972 / ATCC 24843) (Fission yeast).